Here is a 216-residue protein sequence, read N- to C-terminus: MMSACLGFRELGLQPYEPVLEAMRRFTEQRSPDSQDEIWLVEHPAVFTQGQAGKAEHLLVPGDIPVVQTDRGGQVTYHGPGQLVAYLLLDVRRLGFGVRELVSRIELALIDLLASYAVQASAKPDAPGVYVDGAKIASLGLRIRNGRSFHGLALNVDMDLAPFRRINPCGYAGLAMTQLRDLAGPIELDEVRTRLRGQLVKHLDYAEQTTLTGGID.

A BPL/LPL catalytic domain is found at 32–207; sequence PDSQDEIWLV…QLVKHLDYAE (176 aa). Substrate-binding positions include 71–78, 138–140, and 151–153; these read RGGQVTYH, SLG, and GLA. Cys169 functions as the Acyl-thioester intermediate in the catalytic mechanism.

It belongs to the LipB family.

The protein localises to the cytoplasm. The catalysed reaction is octanoyl-[ACP] + L-lysyl-[protein] = N(6)-octanoyl-L-lysyl-[protein] + holo-[ACP] + H(+). It participates in protein modification; protein lipoylation via endogenous pathway; protein N(6)-(lipoyl)lysine from octanoyl-[acyl-carrier-protein]: step 1/2. In terms of biological role, catalyzes the transfer of endogenously produced octanoic acid from octanoyl-acyl-carrier-protein onto the lipoyl domains of lipoate-dependent enzymes. Lipoyl-ACP can also act as a substrate although octanoyl-ACP is likely to be the physiological substrate. The sequence is that of Octanoyltransferase from Pseudomonas putida (strain ATCC 47054 / DSM 6125 / CFBP 8728 / NCIMB 11950 / KT2440).